Here is a 103-residue protein sequence, read N- to C-terminus: MQNQRIRIRLKGFDHRLIDQSTAEIVETAKRTGAQVRGPIPLPTRKERYTILISPHVNKDARDQYELRTHKRLVDIVEPTEKTVDALMRLDLAAGVDVQISLG.

Belongs to the universal ribosomal protein uS10 family. Part of the 30S ribosomal subunit.

In terms of biological role, involved in the binding of tRNA to the ribosomes. This chain is Small ribosomal subunit protein uS10, found in Shewanella baltica (strain OS223).